The sequence spans 110 residues: Co-chaperonin GroES (110 aa).

This sequence belongs to the GroES chaperonin family. In terms of assembly, heptamer of 7 subunits arranged in a ring. Interacts with the chaperonin GroEL.

The protein localises to the cytoplasm. In terms of biological role, together with the chaperonin GroEL, plays an essential role in assisting protein folding. The GroEL-GroES system forms a nano-cage that allows encapsulation of the non-native substrate proteins and provides a physical environment optimized to promote and accelerate protein folding. GroES binds to the apical surface of the GroEL ring, thereby capping the opening of the GroEL channel. This chain is Co-chaperonin GroES, found in Mycoplasma genitalium (strain ATCC 33530 / DSM 19775 / NCTC 10195 / G37) (Mycoplasmoides genitalium).